A 149-amino-acid chain; its full sequence is Ribonuclease H (149 aa).

The RNase H type-1 domain occupies 1-145 (MKKVIIYTDG…CDKLANEAMD (145 aa)). Positions 9, 50, 72, and 137 each coordinate Mg(2+).

This sequence belongs to the RNase H family. In terms of assembly, monomer. Requires Mg(2+) as cofactor.

It localises to the cytoplasm. The catalysed reaction is Endonucleolytic cleavage to 5'-phosphomonoester.. In terms of biological role, endonuclease that specifically degrades the RNA of RNA-DNA hybrids. This chain is Ribonuclease H, found in Clostridium botulinum (strain ATCC 19397 / Type A).